Reading from the N-terminus, the 520-residue chain is 3-phosphoshikimate 1-carboxyvinyltransferase, chloroplastic (520 aa).

Residues 1–76 (MAQISSMAQG…RISASVATAE (76 aa)) constitute a chloroplast transit peptide. 3-phosphoshikimate contacts are provided by lysine 99, serine 100, and arginine 104. Lysine 99 is a binding site for phosphoenolpyruvate. Phosphoenolpyruvate contacts are provided by glycine 177 and arginine 207. Positions 254, 255, 256, 282, 407, and 434 each coordinate 3-phosphoshikimate. Residue glutamine 256 coordinates phosphoenolpyruvate. Aspartate 407 (proton acceptor) is an active-site residue. Phosphoenolpyruvate is bound by residues arginine 438, arginine 480, and lysine 505.

Belongs to the EPSP synthase family.

It localises to the plastid. The protein resides in the chloroplast. It catalyses the reaction 3-phosphoshikimate + phosphoenolpyruvate = 5-O-(1-carboxyvinyl)-3-phosphoshikimate + phosphate. The protein operates within metabolic intermediate biosynthesis; chorismate biosynthesis; chorismate from D-erythrose 4-phosphate and phosphoenolpyruvate: step 6/7. In terms of biological role, catalyzes the transfer of the enolpyruvyl moiety of phosphoenolpyruvate (PEP) to the 5-hydroxyl of shikimate-3-phosphate (S3P) to produce enolpyruvyl shikimate-3-phosphate and inorganic phosphate. The polypeptide is 3-phosphoshikimate 1-carboxyvinyltransferase, chloroplastic (Solanum lycopersicum (Tomato)).